Consider the following 95-residue polypeptide: Large ribosomal subunit protein bL27 (95 aa).

The disordered stretch occupies residues 1–21 (MAHKKGASSSRNGRDSNAQRL). Residues 7-19 (ASSSRNGRDSNAQ) are compositionally biased toward polar residues.

The protein belongs to the bacterial ribosomal protein bL27 family.

This chain is Large ribosomal subunit protein bL27, found in Parafrankia sp. (strain EAN1pec).